The primary structure comprises 229 residues: 5'-methylthioadenosine/S-adenosylhomocysteine nucleosidase (229 aa).

The Proton acceptor role is filled by Glu-12. Residues Gly-78, Ile-152, and 173 to 174 (ME) contribute to the substrate site. The Proton donor role is filled by Asp-197.

This sequence belongs to the PNP/UDP phosphorylase family. MtnN subfamily.

It catalyses the reaction S-adenosyl-L-homocysteine + H2O = S-(5-deoxy-D-ribos-5-yl)-L-homocysteine + adenine. It carries out the reaction S-methyl-5'-thioadenosine + H2O = 5-(methylsulfanyl)-D-ribose + adenine. The catalysed reaction is 5'-deoxyadenosine + H2O = 5-deoxy-D-ribose + adenine. It participates in amino-acid biosynthesis; L-methionine biosynthesis via salvage pathway; S-methyl-5-thio-alpha-D-ribose 1-phosphate from S-methyl-5'-thioadenosine (hydrolase route): step 1/2. Its function is as follows. Catalyzes the irreversible cleavage of the glycosidic bond in both 5'-methylthioadenosine (MTA) and S-adenosylhomocysteine (SAH/AdoHcy) to adenine and the corresponding thioribose, 5'-methylthioribose and S-ribosylhomocysteine, respectively. Also cleaves 5'-deoxyadenosine, a toxic by-product of radical S-adenosylmethionine (SAM) enzymes, into 5-deoxyribose and adenine. In Haemophilus influenzae (strain PittEE), this protein is 5'-methylthioadenosine/S-adenosylhomocysteine nucleosidase.